The chain runs to 252 residues: Chitooligosaccharide deacetylase (252 aa).

Positions 61 and 125 each coordinate Mg(2+).

It belongs to the YdjC deacetylase family. ChbG subfamily. In terms of assembly, homodimer. Requires Mg(2+) as cofactor.

The protein localises to the cytoplasm. It carries out the reaction N,N'-diacetylchitobiose + H2O = N-acetyl-beta-D-glucosaminyl-(1-&gt;4)-D-glucosamine + acetate. The enzyme catalyses diacetylchitobiose-6'-phosphate + H2O = N'-monoacetylchitobiose-6'-phosphate + acetate. It functions in the pathway glycan degradation; chitin degradation. In terms of biological role, involved in the degradation of chitin. ChbG is essential for growth on the acetylated chitooligosaccharides chitobiose and chitotriose but is dispensable for growth on cellobiose and chitosan dimer, the deacetylated form of chitobiose. Deacetylation of chitobiose-6-P and chitotriose-6-P is necessary for both the activation of the chb promoter by the regulatory protein ChbR and the hydrolysis of phosphorylated beta-glucosides by the phospho-beta-glucosidase ChbF. Catalyzes the removal of only one acetyl group from chitobiose-6-P to yield monoacetylchitobiose-6-P, the inducer of ChbR and the substrate of ChbF. This chain is Chitooligosaccharide deacetylase, found in Salmonella typhi.